A 48-amino-acid chain; its full sequence is Sperm protamine P1 (48 aa).

Belongs to the protamine P1 family. Testis.

It localises to the nucleus. It is found in the chromosome. In terms of biological role, protamines substitute for histones in the chromatin of sperm during the haploid phase of spermatogenesis. They compact sperm DNA into a highly condensed, stable and inactive complex. The polypeptide is Sperm protamine P1 (PRM1) (Corynorhinus townsendii (Townsend's big-eared bat)).